A 473-amino-acid chain; its full sequence is MSRVHAFVDDALGDLDAVALADAIRSGRVGRADVVEAAIARAEAVNPALNALAYAAFDVARDAAAMGTGQEAFFSGVPTFIKDNVDVAGQPSMHGTDAWEPYAAVADSEITRVVLGTGLVSLGKTQLSEFGFSAVAEHPRLGPVRNPWNTDYTAGASSSGSGALVAAGVVPIAHANDGGGSIRIPAACNGLVGLKPSRGRLPLEPEYRRLPVGIVANGVLTRTVRDTAAFYREAERLWRNHQLPPVGDVTSPVKQRLRIAVVTRSVLREASPEVRQLTLKLAGLLEELGHRVEHVDHPPAPASFVDDFVLYWGFLALAQVRSGRRTFGRTFDPTRLDELTLGLARHTGRNLHRLPLAIMRLRMLRRRSVRFFGTYDVLLTPTVAEATPQVGYLAPTDYQTVLDRLSSWVVFTPVQNVTGVPAISLPLAQSADGMPVGMMLSADTGREALLLELAYELEEARPWARIHAPNIAE.

Catalysis depends on charge relay system residues K82 and S157. The active-site Acyl-ester intermediate is S181.

The protein belongs to the amidase family.

The catalysed reaction is a monocarboxylic acid amide + H2O = a monocarboxylate + NH4(+). In Mycobacterium bovis (strain ATCC BAA-935 / AF2122/97), this protein is Putative amidase AmiC (amiC).